The sequence spans 483 residues: Altronate oxidoreductase (483 aa).

18–29 (IIQFGEGNFLRA) serves as a coordination point for NAD(+).

Belongs to the mannitol dehydrogenase family. UxaB subfamily.

It catalyses the reaction D-altronate + NAD(+) = keto-D-tagaturonate + NADH + H(+). It functions in the pathway carbohydrate metabolism; pentose and glucuronate interconversion. This is Altronate oxidoreductase (uxaB) from Escherichia coli O157:H7.